A 391-amino-acid chain; its full sequence is Transaldolase (391 aa).

The tract at residues 1–329 (MGKNLLEQLR…RLKVLDGQEH (329 aa)) is transaldolase. Lys-136 serves as the catalytic Schiff-base intermediate with substrate. EF-hand domains lie at 329–364 (HIKH…FDAL) and 365–387 (DRDH…AFRL). Residues Asp-342, Asp-344, Asp-346, Glu-353, Asp-365, Asp-367, Asp-369, Lys-371, and Glu-376 each coordinate Ca(2+).

The protein belongs to the transaldolase family. Type 1 subfamily.

Its subcellular location is the cytoplasm. It carries out the reaction D-sedoheptulose 7-phosphate + D-glyceraldehyde 3-phosphate = D-erythrose 4-phosphate + beta-D-fructose 6-phosphate. The protein operates within carbohydrate degradation; pentose phosphate pathway; D-glyceraldehyde 3-phosphate and beta-D-fructose 6-phosphate from D-ribose 5-phosphate and D-xylulose 5-phosphate (non-oxidative stage): step 2/3. Functionally, transaldolase is important for the balance of metabolites in the pentose-phosphate pathway. The polypeptide is Transaldolase (Synechocystis sp. (strain ATCC 27184 / PCC 6803 / Kazusa)).